The sequence spans 393 residues: Purine permease 14 (393 aa).

The residue at position 2 (Ala-2) is an N-acetylalanine. A run of 10 helical transmembrane segments spans residues 46–66 (WPTITISIIFVIIGQSIAKLL), 90–110 (TQSLLQTVGFPLLLLPFLIFI), 133–153 (LAVIYICIGIIMSVQGRLAAM), 161–181 (GVFTLIYTAQLFFTPIFAAFI), 189–209 (WVVISVILAIITGALTLSSSF), 225–245 (WAALFAGICFALLLCNIQNVF), 268–288 (VIIFSSLVATIISVVGLLIAG), 308–328 (VMAMVGQAVSWQVYWVGIVGL), 339–359 (VISVITWPIVSVLVVIFFNFM), and 363–383 (FDAFKGVALVTAVLSAAAYFF).

The protein belongs to the purine permeases (TC 2.A.7.14) family. In terms of tissue distribution, expressed in seedlings, leaves, embryos, ovules, seeds and the root and shoot meristems. In heart-stage embryos, detected in cells that failed to respond to cytokinins, including the prospective cotyledons.

It localises to the cell membrane. In terms of biological role, purine permease implicated in ATP-dependent cytokinin translocation that controls the spatiotemporal landscape of cytokinin signaling. Depletes ligands from the apoplast, which leads to a suppression of the cytokinin response. This is Purine permease 14 from Arabidopsis thaliana (Mouse-ear cress).